The primary structure comprises 163 residues: NADH-quinone oxidoreductase subunit I 1 (163 aa).

4Fe-4S ferredoxin-type domains follow at residues 53–83 and 94–123; these read LRRY…IEAG and VRYD…EGPN. Residues C63, C66, C69, C73, C103, C106, C109, and C113 each coordinate [4Fe-4S] cluster.

Belongs to the complex I 23 kDa subunit family. NDH-1 is composed of 14 different subunits. Subunits NuoA, H, J, K, L, M, N constitute the membrane sector of the complex. Requires [4Fe-4S] cluster as cofactor.

It localises to the cell inner membrane. The catalysed reaction is a quinone + NADH + 5 H(+)(in) = a quinol + NAD(+) + 4 H(+)(out). NDH-1 shuttles electrons from NADH, via FMN and iron-sulfur (Fe-S) centers, to quinones in the respiratory chain. The immediate electron acceptor for the enzyme in this species is believed to be ubiquinone. Couples the redox reaction to proton translocation (for every two electrons transferred, four hydrogen ions are translocated across the cytoplasmic membrane), and thus conserves the redox energy in a proton gradient. The chain is NADH-quinone oxidoreductase subunit I 1 from Rhizobium etli (strain ATCC 51251 / DSM 11541 / JCM 21823 / NBRC 15573 / CFN 42).